The sequence spans 106 residues: NADH-quinone oxidoreductase subunit K (106 aa).

Helical transmembrane passes span 8–28 (IGIENYIFLSVVLFCIGVFGV), 35–55 (IIVFMSIEIMLNAVNLLFVAF), and 66–86 (VFVFFSMAVAAAEVAVGLAIL).

It belongs to the complex I subunit 4L family. As to quaternary structure, NDH-1 is composed of 14 different subunits. Subunits NuoA, H, J, K, L, M, N constitute the membrane sector of the complex.

The protein resides in the cell inner membrane. The catalysed reaction is a quinone + NADH + 5 H(+)(in) = a quinol + NAD(+) + 4 H(+)(out). Its function is as follows. NDH-1 shuttles electrons from NADH, via FMN and iron-sulfur (Fe-S) centers, to quinones in the respiratory chain. The immediate electron acceptor for the enzyme in this species is believed to be a menaquinone. Couples the redox reaction to proton translocation (for every two electrons transferred, four hydrogen ions are translocated across the cytoplasmic membrane), and thus conserves the redox energy in a proton gradient. This is NADH-quinone oxidoreductase subunit K from Flavobacterium johnsoniae (strain ATCC 17061 / DSM 2064 / JCM 8514 / BCRC 14874 / CCUG 350202 / NBRC 14942 / NCIMB 11054 / UW101) (Cytophaga johnsonae).